The following is a 959-amino-acid chain: Leucine--tRNA ligase (959 aa).

The 'HIGH' region signature appears at 39–49 (PYVNAYPHLGS). Residues 637 to 641 (KMSKS) carry the 'KMSKS' region motif. Lys640 is an ATP binding site. Positions 933–959 (TEEDGGSPRRANALPGRPALYAEKRGG) are disordered.

This sequence belongs to the class-I aminoacyl-tRNA synthetase family.

The protein localises to the cytoplasm. The enzyme catalyses tRNA(Leu) + L-leucine + ATP = L-leucyl-tRNA(Leu) + AMP + diphosphate. The protein is Leucine--tRNA ligase of Aeropyrum pernix (strain ATCC 700893 / DSM 11879 / JCM 9820 / NBRC 100138 / K1).